A 70-amino-acid chain; its full sequence is DNA gyrase inhibitor YacG (70 aa).

Zn(2+) contacts are provided by Cys9, Cys12, Cys28, and Cys32. Residues 44-70 (SRKIPGSSIDPESIVTTNNKQDNVDEQ) form a disordered region.

This sequence belongs to the DNA gyrase inhibitor YacG family. As to quaternary structure, interacts with GyrB. Zn(2+) is required as a cofactor.

Functionally, inhibits all the catalytic activities of DNA gyrase by preventing its interaction with DNA. Acts by binding directly to the C-terminal domain of GyrB, which probably disrupts DNA binding by the gyrase. The chain is DNA gyrase inhibitor YacG from Legionella pneumophila subsp. pneumophila (strain Philadelphia 1 / ATCC 33152 / DSM 7513).